Here is a 270-residue protein sequence, read N- to C-terminus: Acyl-[acyl-carrier-protein]--UDP-N-acetylglucosamine O-acyltransferase (270 aa).

It belongs to the transferase hexapeptide repeat family. LpxA subfamily. In terms of assembly, homotrimer.

It is found in the cytoplasm. The catalysed reaction is a (3R)-hydroxyacyl-[ACP] + UDP-N-acetyl-alpha-D-glucosamine = a UDP-3-O-[(3R)-3-hydroxyacyl]-N-acetyl-alpha-D-glucosamine + holo-[ACP]. The protein operates within glycolipid biosynthesis; lipid IV(A) biosynthesis; lipid IV(A) from (3R)-3-hydroxytetradecanoyl-[acyl-carrier-protein] and UDP-N-acetyl-alpha-D-glucosamine: step 1/6. Its function is as follows. Involved in the biosynthesis of lipid A, a phosphorylated glycolipid that anchors the lipopolysaccharide to the outer membrane of the cell. The polypeptide is Acyl-[acyl-carrier-protein]--UDP-N-acetylglucosamine O-acyltransferase (Helicobacter pylori (strain G27)).